Reading from the N-terminus, the 211-residue chain is tRNA (guanine-N(7)-)-methyltransferase (211 aa).

S-adenosyl-L-methionine contacts are provided by glutamate 44, aspartate 69, aspartate 96, and aspartate 118. Aspartate 118 is a catalytic residue. Lysine 122 contacts substrate. The interval 124-129 is interaction with RNA; it reads KHEKRR. Substrate-binding positions include aspartate 154 and 191–194; that span reads TEYE.

Belongs to the class I-like SAM-binding methyltransferase superfamily. TrmB family.

It catalyses the reaction guanosine(46) in tRNA + S-adenosyl-L-methionine = N(7)-methylguanosine(46) in tRNA + S-adenosyl-L-homocysteine. It participates in tRNA modification; N(7)-methylguanine-tRNA biosynthesis. Its function is as follows. Catalyzes the formation of N(7)-methylguanine at position 46 (m7G46) in tRNA. The protein is tRNA (guanine-N(7)-)-methyltransferase of Streptococcus pyogenes serotype M18 (strain MGAS8232).